We begin with the raw amino-acid sequence, 232 residues long: Glycerol-3-phosphate acyltransferase 4 (232 aa).

The next 6 helical transmembrane spans lie at 4-24 (VFLI…AYLL), 54-76 (LGLA…AGWL), 80-99 (LWQQ…WPVF), 107-127 (GIAT…LIAL), 143-163 (VFLG…FFGV), and 168-188 (TVTW…LMAP).

It belongs to the PlsY family. In terms of assembly, probably interacts with PlsX.

It is found in the cell membrane. It catalyses the reaction an acyl phosphate + sn-glycerol 3-phosphate = a 1-acyl-sn-glycero-3-phosphate + phosphate. It functions in the pathway lipid metabolism; phospholipid metabolism. Functionally, catalyzes the transfer of an acyl group from acyl-phosphate (acyl-PO(4)) to glycerol-3-phosphate (G3P) to form lysophosphatidic acid (LPA). This enzyme utilizes acyl-phosphate as fatty acyl donor, but not acyl-CoA or acyl-ACP. The polypeptide is Glycerol-3-phosphate acyltransferase 4 (Dehalococcoides mccartyi (strain CBDB1)).